A 429-amino-acid polypeptide reads, in one-letter code: Adenylosuccinate synthetase (429 aa).

GTP is bound by residues 12–18 (GDEGKGK) and 40–42 (GHT). Catalysis depends on Asp13, which acts as the Proton acceptor. Residues Asp13 and Gly40 each contribute to the Mg(2+) site. IMP contacts are provided by residues 13 to 16 (DEGK), 38 to 41 (NAGH), Thr128, Arg142, Gln223, Thr238, and Arg302. Catalysis depends on His41, which acts as the Proton donor. Substrate is bound at residue 298-304 (TTTGRPR). GTP-binding positions include Arg304, 330–332 (SID), and 412–414 (SVG).

Belongs to the adenylosuccinate synthetase family. In terms of assembly, homodimer. It depends on Mg(2+) as a cofactor.

The protein resides in the cytoplasm. It catalyses the reaction IMP + L-aspartate + GTP = N(6)-(1,2-dicarboxyethyl)-AMP + GDP + phosphate + 2 H(+). It participates in purine metabolism; AMP biosynthesis via de novo pathway; AMP from IMP: step 1/2. Its function is as follows. Plays an important role in the de novo pathway of purine nucleotide biosynthesis. Catalyzes the first committed step in the biosynthesis of AMP from IMP. The polypeptide is Adenylosuccinate synthetase (Bacillus thuringiensis (strain Al Hakam)).